The chain runs to 396 residues: Putative amidohydrolase YhaA (396 aa).

Asp-85 is an active-site residue. Glu-143 (proton acceptor) is an active-site residue. Residues Glu-144, Arg-182, and His-368 each contribute to the Zn(2+) site.

The protein belongs to the peptidase M20A family. Zn(2+) is required as a cofactor. Requires Co(2+) as cofactor.

The chain is Putative amidohydrolase YhaA (yhaA) from Bacillus subtilis (strain 168).